The chain runs to 740 residues: NAD(P)H-quinone oxidoreductase subunit 5, chloroplastic (740 aa).

A run of 16 helical transmembrane segments spans residues 9–29 (WIIPFVPLLVTMLIGLGLLLI), 39–59 (IWAFPAVLLLSIVMVFSTKLA), 89–109 (IDPLTSIMSILITTVGIMVLI), 125–145 (FAYMSFFNTSMLGLVTSPNLI), 147–167 (IHIFWELVGMCSYLLIGFWFT), 185–205 (GDFGLLLGILGFYLITGSFEF), 231–251 (AFLLFLGAVAKSAQFPLHVWL), 259–279 (TPISALIHAATMVAAGIFLVA), 281–301 (LLPLFIGIPYIMNIISLIGLI), 328–348 (LGYIMLALGIGSYRAALFHLI), 355–375 (ALLFLGSGSIIHSMEPIVGYS), 397–417 (TTFFLGTLSLCGIPPLACFWS), 426–446 (WLYSPIFATIACYTAGLTAFY), 548–568 (TMLFPLLILAIFTLFVGCIGI), 607–627 (FYSVSIAYFGIFIASVLYGSV), and 719–739 (GRISSYLFLYLACVSIVLLLV).

This sequence belongs to the complex I subunit 5 family. NDH is composed of at least 16 different subunits, 5 of which are encoded in the nucleus.

The protein resides in the plastid. Its subcellular location is the chloroplast thylakoid membrane. The enzyme catalyses a plastoquinone + NADH + (n+1) H(+)(in) = a plastoquinol + NAD(+) + n H(+)(out). It carries out the reaction a plastoquinone + NADPH + (n+1) H(+)(in) = a plastoquinol + NADP(+) + n H(+)(out). NDH shuttles electrons from NAD(P)H:plastoquinone, via FMN and iron-sulfur (Fe-S) centers, to quinones in the photosynthetic chain and possibly in a chloroplast respiratory chain. The immediate electron acceptor for the enzyme in this species is believed to be plastoquinone. Couples the redox reaction to proton translocation, and thus conserves the redox energy in a proton gradient. The chain is NAD(P)H-quinone oxidoreductase subunit 5, chloroplastic (ndhF) from Nuphar advena (Common spatterdock).